Here is a 92-residue protein sequence, read N- to C-terminus: Small ribosomal subunit protein uS19c (92 aa).

It belongs to the universal ribosomal protein uS19 family.

The protein localises to the plastid. It localises to the chloroplast. Functionally, protein S19 forms a complex with S13 that binds strongly to the 16S ribosomal RNA. The protein is Small ribosomal subunit protein uS19c (rps19) of Trieres chinensis (Marine centric diatom).